The sequence spans 512 residues: Cytoplasmic tRNA 2-thiolation protein 2-A (512 aa).

Belongs to the CTU2/NCS2 family.

The protein resides in the cytoplasm. It participates in tRNA modification; 5-methoxycarbonylmethyl-2-thiouridine-tRNA biosynthesis. In terms of biological role, plays a central role in 2-thiolation of mcm(5)S(2)U at tRNA wobble positions of tRNA(Lys), tRNA(Glu) and tRNA(Gln). May act by forming a heterodimer with ctu1/atpbd3 that ligates sulfur from thiocarboxylated urm1 onto the uridine of tRNAs at wobble position. The protein is Cytoplasmic tRNA 2-thiolation protein 2-A (ctu2-a) of Xenopus laevis (African clawed frog).